Here is a 220-residue protein sequence, read N- to C-terminus: Adenylate kinase (220 aa).

ATP is bound at residue 12-17 (GAGKGT). Positions 32-62 (STGDIFRDIVKKENDELGKKIKEIMEKGELV) are NMP. AMP-binding positions include Thr33, Arg38, 60–62 (ELV), 88–91 (GYPR), and Gln95. Residues 129–166 (SRRICPKCGRIYNMISLPPKEDELCDDCKVKLVQRDDD) form an LID region. Residue Arg130 participates in ATP binding. Zn(2+)-binding residues include Cys133 and Cys136. 139–140 (IY) provides a ligand contact to ATP. Residues Cys153 and Cys156 each contribute to the Zn(2+) site. Arg163 and Arg174 together coordinate AMP. ATP is bound at residue Ile202.

This sequence belongs to the adenylate kinase family. In terms of assembly, monomer.

The protein resides in the cytoplasm. The catalysed reaction is AMP + ATP = 2 ADP. It functions in the pathway purine metabolism; AMP biosynthesis via salvage pathway; AMP from ADP: step 1/1. Catalyzes the reversible transfer of the terminal phosphate group between ATP and AMP. Plays an important role in cellular energy homeostasis and in adenine nucleotide metabolism. The protein is Adenylate kinase of Thermotoga neapolitana.